The sequence spans 504 residues: Anaerobic nitric oxide reductase transcription regulator NorR (504 aa).

D57 is subject to 4-aspartylphosphate. Positions 187–416 (MIGLSPGMTQ…LEHAIHRAVV (230 aa)) constitute a Sigma-54 factor interaction domain. Residues 215-222 (GETGTGKE) and 278-287 (ADNGTLFLDE) each bind ATP. Positions 479–498 (WAACARMLETDVANLHRLAK) form a DNA-binding region, H-T-H motif.

It participates in nitrogen metabolism; nitric oxide reduction. In terms of biological role, required for the expression of anaerobic nitric oxide (NO) reductase, acts as a transcriptional activator for at least the norVW operon. Activation also requires sigma-54. This Shigella boydii serotype 4 (strain Sb227) protein is Anaerobic nitric oxide reductase transcription regulator NorR.